Reading from the N-terminus, the 230-residue chain is Fibrillarin-like rRNA/tRNA 2'-O-methyltransferase (230 aa).

Residues 87–88 (TT), 105–106 (EY), 130–131 (DA), and 150–153 (DVAQ) contribute to the S-adenosyl-L-methionine site.

As to quaternary structure, interacts with nop5. Component of box C/D small ribonucleoprotein (sRNP) particles that contain rpl7ae, FlpA and nop5, plus a guide RNA.

In terms of biological role, involved in pre-rRNA and tRNA processing. Utilizes the methyl donor S-adenosyl-L-methionine to catalyze the site-specific 2'-hydroxyl methylation of ribose moieties in rRNA and tRNA. Site specificity is provided by a guide RNA that base pairs with the substrate. Methylation occurs at a characteristic distance from the sequence involved in base pairing with the guide RNA. In Methanocaldococcus jannaschii (strain ATCC 43067 / DSM 2661 / JAL-1 / JCM 10045 / NBRC 100440) (Methanococcus jannaschii), this protein is Fibrillarin-like rRNA/tRNA 2'-O-methyltransferase.